The sequence spans 354 residues: Protein REDOX 1 (354 aa).

Zn(2+) is bound at residue Cys-44. An NAD(+)-binding site is contributed by 45-49; the sequence is HSDLH. Residues His-66, Cys-97, Cys-100, Cys-103, and Cys-111 each coordinate Zn(2+). Residues 185-190, Lys-214, 271-273, 295-297, and Arg-340 each bind NAD(+); these read GLGGLG, VGA, and SAV.

This sequence belongs to the zinc-containing alcohol dehydrogenase family. Zn(2+) serves as cofactor. Expressed in leaf epidermis.

It carries out the reaction 3,17-didehydrostemmadenine + NADPH + H2O = (16S)-deshydroxymethyl-stemmadenine + formate + NADP(+). The enzyme catalyses 3,17-didehydrostemmadenine + NADPH + H2O = (16R)-deshydroxymethyl-stemmadenine + formate + NADP(+). It catalyses the reaction 17-dehydrostemmadenine + NADP(+) = 3,17-didehydrostemmadenine + NADPH. The protein operates within alkaloid biosynthesis. In terms of biological role, component of iboga and aspidosperma monoterpenoid indole alkaloids (MIAs, e.g. tabersonine and catharanthine) biosynthesis pathway from 19E-geissoschizine. Catalyzes the first oxidation step of the unstable intermediate product resulting from the reaction triggered by the geissoschizine oxidase (GO) in the stemmadenine biosynthesis process from 19E-geissoschizine. In Catharanthus roseus (Madagascar periwinkle), this protein is Protein REDOX 1.